The sequence spans 299 residues: tRNA dimethylallyltransferase (299 aa).

Position 13–20 (13–20 (GPTASGKT)) interacts with ATP. Substrate is bound at residue 15–20 (TASGKT). Residues 38–41 (DSRQ) are interaction with substrate tRNA.

It belongs to the IPP transferase family. As to quaternary structure, monomer. Requires Mg(2+) as cofactor.

It carries out the reaction adenosine(37) in tRNA + dimethylallyl diphosphate = N(6)-dimethylallyladenosine(37) in tRNA + diphosphate. In terms of biological role, catalyzes the transfer of a dimethylallyl group onto the adenine at position 37 in tRNAs that read codons beginning with uridine, leading to the formation of N6-(dimethylallyl)adenosine (i(6)A). This Prochlorococcus marinus (strain NATL2A) protein is tRNA dimethylallyltransferase.